Here is a 123-residue protein sequence, read N- to C-terminus: DPRFNPKYPTIYDYGYGTPAGTLGINCMHELYPYVEGVTINRQKHYDEQEAIRNGEIQQMQRYYERQVRKWKQRKLAAERIGNTNLEAKCSSAIRRYQSKIRKIVSENDFLTRQYDREKIANI.

The protein belongs to the Lactobacillus delbrueckii bacteriophages ORF1 protein family.

Its subcellular location is the virion. This Lactococcus phage mv4 (Lactococcus delbrueckii bacteriophage mv4) protein is Structural protein.